A 576-amino-acid chain; its full sequence is Protein NRT1/ PTR FAMILY 2.12 (576 aa).

Transmembrane regions (helical) follow at residues 58-78 (FNVY…GALI), 89-109 (IAYA…TACL), 130-150 (KLQL…SGGI), 176-196 (FFNW…TVVV), 203-223 (WVIG…LFFV), 329-349 (VWSA…FMVF), 364-384 (IPAA…VPIY), 406-426 (MGIG…VEGV), 441-461 (WLAL…IGLI), 475-495 (IANS…SLLV), and 522-542 (YFYY…WYCA).

Belongs to the major facilitator superfamily. Proton-dependent oligopeptide transporter (POT/PTR) (TC 2.A.17) family. As to expression, expressed in flowers and siliques. Expressed in vascular bundle of the siliques and in funiculus.

It is found in the cell membrane. Functionally, low-affinity proton-dependent nitrate transporter. Not involved in dipeptides transport. Involved in delivering nitrate for seed development. The protein is Protein NRT1/ PTR FAMILY 2.12 (NPF2.12) of Arabidopsis thaliana (Mouse-ear cress).